Reading from the N-terminus, the 357-residue chain is Phospho-N-acetylmuramoyl-pentapeptide-transferase (357 aa).

Helical transmembrane passes span 4 to 24, 52 to 72, 77 to 97, 115 to 135, 153 to 173, 186 to 206, 228 to 248, 255 to 275, 280 to 300, and 334 to 354; these read QILFSGVIGLFLTLVGTPLLI, TMGGIAFILATIIAYFMSKVI, PTFSGLLVLGLMAGMGLVGFL, AKMAGQLIVGIAFAVLALQFA, FGWTIGPVLFVIWALFMILAM, LATGAATMVFGAYTFIGVWQF, PLDLAVVASALMGACFGFLWW, IFMGDTGSLALGGALAGLAIC, LLVALLGGLFVLITMSVVIQV, and FWIIQGMCVIVGLGLFYAGWA.

This sequence belongs to the glycosyltransferase 4 family. MraY subfamily. It depends on Mg(2+) as a cofactor.

The protein resides in the cell membrane. It catalyses the reaction UDP-N-acetyl-alpha-D-muramoyl-L-alanyl-gamma-D-glutamyl-meso-2,6-diaminopimeloyl-D-alanyl-D-alanine + di-trans,octa-cis-undecaprenyl phosphate = di-trans,octa-cis-undecaprenyl diphospho-N-acetyl-alpha-D-muramoyl-L-alanyl-D-glutamyl-meso-2,6-diaminopimeloyl-D-alanyl-D-alanine + UMP. It functions in the pathway cell wall biogenesis; peptidoglycan biosynthesis. Catalyzes the initial step of the lipid cycle reactions in the biosynthesis of the cell wall peptidoglycan: transfers peptidoglycan precursor phospho-MurNAc-pentapeptide from UDP-MurNAc-pentapeptide onto the lipid carrier undecaprenyl phosphate, yielding undecaprenyl-pyrophosphoryl-MurNAc-pentapeptide, known as lipid I. This chain is Phospho-N-acetylmuramoyl-pentapeptide-transferase, found in Streptomyces avermitilis (strain ATCC 31267 / DSM 46492 / JCM 5070 / NBRC 14893 / NCIMB 12804 / NRRL 8165 / MA-4680).